The following is a 64-amino-acid chain: Translational regulator CsrA (64 aa).

It belongs to the CsrA/RsmA family. As to quaternary structure, homodimer; the beta-strands of each monomer intercalate to form a hydrophobic core, while the alpha-helices form wings that extend away from the core.

The protein localises to the cytoplasm. In terms of biological role, a key translational regulator that binds mRNA to regulate translation initiation and/or mRNA stability. Mediates global changes in gene expression, shifting from rapid growth to stress survival by linking envelope stress, the stringent response and the catabolite repression systems. Usually binds in the 5'-UTR; binding at or near the Shine-Dalgarno sequence prevents ribosome-binding, repressing translation, binding elsewhere in the 5'-UTR can activate translation and/or stabilize the mRNA. Its function is antagonized by small RNA(s). The polypeptide is Translational regulator CsrA (Dichelobacter nodosus (strain VCS1703A)).